Consider the following 424-residue polypeptide: Keratin, type I cytoskeletal 20 (424 aa).

Residues 1 to 69 (MDFSRRSFHR…TGGGDLFVGN (69 aa)) form a head region. Phosphoserine; by MAPKAPK2, MAPKAPK3 and PKC is present on Ser-13. The tract at residues 70-105 (EKMAMQNLNDRLASYLEKVRTLEQSNSKLEVQIKQW) is coil 1A. Residues 70-381 (EKMAMQNLND…RLLEGEDVKT (312 aa)) enclose the IF rod domain. Residues 106-123 (YETNAPRAGRDYSAYYRQ) are linker 1. Residues 124–215 (IEELRSQIKD…KEHQEEVDGL (92 aa)) are coil 1B. The interval 216-238 (HKHLGNTVNVEVDAAPGLNLGVI) is linker 12. The segment at 239-377 (MNEMRQKYEV…ATYRRLLEGE (139 aa)) is coil 2. Residues 378 to 424 (DVKTTEYQLSTLEERDIKKTRKIKTVVQEVVDGKVVSSEVKEVEENI) form a tail region.

Belongs to the intermediate filament family. In terms of assembly, heterotetramer of two type I and two type II keratins. Associates with KRT8. Post-translationally, hyperphosphorylation at Ser-13 occurs during the early stages of apoptosis but becomes less prominent during the later stages. Phosphorylation at Ser-13 also increases in response to stress brought on by cell injury. In terms of processing, proteolytically cleaved by caspases during apoptosis. Cleavage occurs at Asp-228. As to expression, expressed predominantly in the intestinal epithelium. Expressed in luminal cells of colonic mucosa. Also expressed in the Merkel cells of keratinized oral mucosa; specifically at the tips of some rete ridges of the gingival mucosa, in the basal layer of the palatal mucosa and in the taste buds of lingual mucosa.

Its subcellular location is the cytoplasm. In terms of biological role, plays a significant role in maintaining keratin filament organization in intestinal epithelia. When phosphorylated, plays a role in the secretion of mucin in the small intestine. This Homo sapiens (Human) protein is Keratin, type I cytoskeletal 20 (KRT20).